The sequence spans 774 residues: Two pore channel protein 2 (774 aa).

Topologically, residues 1–92 (MEEEPLLAGS…GSLRLYRWYY (92 aa)) are cytoplasmic. A helical transmembrane segment spans residues 93 to 113 (SNLCQWGLGLTIAVVLALAFI). Topologically, residues 114-140 (ERPSSLTYTSDIRVKPKPWEPPCGMTE) are extracellular. Residues 141-161 (GIEIVCLCIFILDVTAKGYLI) traverse the membrane as a helical segment. At 162–170 (GWEEFRMNK) the chain is on the cytoplasmic side. Residues 171–191 (WLLAYLIVITASVIDWMLSIS) form a helical membrane-spanning segment. Over 192–197 (MLCDEN) the chain is Extracellular. A helical transmembrane segment spans residues 198 to 218 (LRVRRLIRPFFLLQNSSLMKK). Positions 217-221 (KKTLK) are interaction with phosphatidylinositol 3,5-bisphosphate. The Cytoplasmic segment spans residues 219–232 (TLKCIKRTLPEIAS). Residues 233–253 (VILLLALHICLFTMIGMLIFA) traverse the membrane as a helical segment. Over 254–267 (KSDDPKQNGEWQTY) the chain is Extracellular. An intramembrane region (helical; Pore-forming) is located at residues 268-292 (FRNLPKALSSLLVLLTTANNPDVMI). Residues 293 to 302 (PAYSLNRGYS) are Extracellular-facing. The chain crosses the membrane as a helical span at residues 303–323 (IFFILFSVFGTYLLMNLMTAI). Residues 324–452 (IYNQFRGYLL…YVYSHYYISV (129 aa)) are Cytoplasmic-facing. A helical membrane pass occupies residues 453–475 (LGNAVALANVICICTVLVLNAEK). At 476–486 (SASEKNYFYME) the chain is on the extracellular side. A helical transmembrane segment spans residues 487–507 (IINCIFILYYLIEMLLKIVAF). Residues 508–518 (GWKGYLSYRNN) are Cytoplasmic-facing. Residues 519–539 (IFDGFLTVLLLAIQIVIFITF) traverse the membrane as a helical segment. Residues 540–564 (KIPYVDVDPVPRHVMALWEMIRLVN) lie on the Extracellular side of the membrane. A helical membrane pass occupies residues 565–585 (MLIVFRFLRIIPEIKLMAVVA). Residues 586 to 596 (STIVDLVKNLR) are Cytoplasmic-facing. A helical transmembrane segment spans residues 597-617 (AFAGILLVVYYMFAVLGIWLF). Topologically, residues 618–658 (QGAISPPSNMSLVSNSSLENITGPYSMECGTFEQLEYWPNN) are extracellular. Residues Asn626, Asn632, and Asn637 are each glycosylated (N-linked (GlcNAc...) asparagine). The helical; Pore-forming intramembrane region spans 659-681 (FDDFASSLILLYNIMVVNNWHVF). The Extracellular segment spans residues 682-696 (TDAYARYTTDWSLVY). A helical transmembrane segment spans residues 697 to 717 (FVVWWLTSSVMWVNLFVALIL). Residues 718-774 (ENFTYKWDRSNGLSVEDVERIAYQSTVQLMFKEHVKEPTEEELLAQLHQHPHLHLSW) lie on the Cytoplasmic side of the membrane.

Belongs to the calcium channel alpha-1 subunit (TC 1.A.1.11) family. Two pore calcium channel subfamily. As to quaternary structure, homodimer. Post-translationally, N-glycosylated.

Its subcellular location is the late endosome membrane. It localises to the lysosome membrane. It catalyses the reaction Na(+)(in) = Na(+)(out). The catalysed reaction is Ca(2+)(in) = Ca(2+)(out). In terms of biological role, intracellular channel initially characterized as a non-selective Ca(2+)-permeable channel activated by NAADP (nicotinic acid adenine dinucleotide phosphate), it is also a highly-selective Na(+) channel activated directly by PI(3,5)P2 (phosphatidylinositol 3,5-bisphosphate). Localizes to the lysosomal and late endosome membranes where it regulates organellar membrane excitability, membrane trafficking, and pH homeostasis. The protein is Two pore channel protein 2 (tpcn2) of Danio rerio (Zebrafish).